The primary structure comprises 353 residues: Abasic site processing protein HMCES (353 aa).

Residue Cys-2 is the Nucleophile of the active site. The residue at position 2 (Cys-2) is a Thiazolidine linkage to a ring-opened DNA abasic site. Glu-127 is a catalytic residue. Glycyl lysine isopeptide (Lys-Gly) (interchain with G-Cter in SUMO2) cross-links involve residues Lys-148 and Lys-151. The residue at position 160 (Ser-160) is a Phosphoserine. Glycyl lysine isopeptide (Lys-Gly) (interchain with G-Cter in SUMO2) cross-links involve residues Lys-274 and Lys-275. A disordered region spans residues 292–353; that stretch reads TKSPKKEVPD…DEPMAKKPNS (62 aa). Ser-294 bears the Phosphoserine mark. The segment covering 295–307 has biased composition (basic and acidic residues); it reads PKKEVPDSPKKDA. A Glycyl lysine isopeptide (Lys-Gly) (interchain with G-Cter in SUMO2) cross-link involves residue Lys-305. Residue Ser-321 is modified to Phosphoserine. Residues 332–338 carry the PIP-box motif; that stretch reads SFLDRWL. A compositionally biased stretch (basic and acidic residues) spans 336 to 353; that stretch reads RWLKQEKEDEPMAKKPNS. Glycyl lysine isopeptide (Lys-Gly) (interchain with G-Cter in SUMO2) cross-links involve residues Lys-339 and Lys-342.

It belongs to the SOS response-associated peptidase family. In terms of assembly, interacts (via PIP-box motif) with PCNA. As to expression, expressed in embryonic stem cells.

It is found in the chromosome. Formation and reversal of DNA-protein cross-link depends on DNA context. Catalyzes formation of the thiazolidine linkage in presence of abasic sites in single-stranded DNA. Mediates the reversal of the thiazolidine cross-link in presence of double stranded DNA. Its function is as follows. Sensor of abasic sites in single-stranded DNA (ssDNA) required to preserve genome integrity by promoting error-free repair of abasic sites. Acts as an enzyme that recognizes and binds abasic sites in ssDNA at replication forks and chemically modifies the lesion by forming a covalent cross-link with DNA: forms a stable thiazolidine linkage between a ring-opened abasic site and the alpha-amino and sulfhydryl substituents of its N-terminal catalytic cysteine residue. Promotes error-free repair by protecting abasic sites from translesion synthesis (TLS) polymerases and endonucleases that are error-prone and would generate mutations and double-strand breaks. The HMCES DNA-protein cross-link is then either reversed or degraded. HMCES is able to catalyze the reversal of its thiazolidine cross-link and cycle between a cross-link and a non-cross-linked state depending on DNA context: mediates self-reversal of the thiazolidine cross-link in double stranded DNA, allowing APEX1 to initiate downstream repair of abasic sites. The HMCES DNA-protein cross-link can also be degraded by the SPRTN metalloprotease following unfolding by the BRIP1/FANCJ helicase. Has preference for ssDNA, but can also accommodate double-stranded DNA with 3' or 5' overhang (dsDNA), and dsDNA-ssDNA 3' junction. Plays a protective role during somatic hypermutation of immunoglobulin genes in B-cells: acts via its ability to form covalent cross-links with abasic sites, thereby limiting the accumulation of deletions in somatic hypermutation target regions. Also involved in class switch recombination (CSR) in B-cells independently of the formation of a DNA-protein cross-link: acts by binding and protecting ssDNA overhangs to promote DNA double-strand break repair through the microhomology-mediated alternative-end-joining (Alt-EJ) pathway. Acts as a protease: mediates autocatalytic processing of its N-terminal methionine in order to expose the catalytic cysteine. The protein is Abasic site processing protein HMCES of Mus musculus (Mouse).